We begin with the raw amino-acid sequence, 317 residues long: Malate dehydrogenase (317 aa).

NAD(+)-binding positions include 13 to 18 (GAGNIG) and Asp38. Residues Arg87 and Arg93 each coordinate substrate. NAD(+) is bound by residues Asn100 and 123–125 (VTN). The substrate site is built by Asn125 and Arg156. The Proton acceptor role is filled by His180.

The protein belongs to the LDH/MDH superfamily. MDH type 3 family.

It carries out the reaction (S)-malate + NAD(+) = oxaloacetate + NADH + H(+). Catalyzes the reversible oxidation of malate to oxaloacetate. The sequence is that of Malate dehydrogenase from Anaplasma marginale (strain Florida).